The sequence spans 356 residues: MAGLKLQAVTKSWDGKTQIIQPLTLDVADGEFIVMVGPSGCGKSTLLRMVAGLERVTSGDIWIDRKRVTEMEPKDRGIAMVFQNYALYPHMSVEENMAWGLKIRGMSKAHIEERVREAARILELDGLLKRRPRELSGGQRQRVAMGRAIVREPAVFLFDEPLSNLDAKLRVQMRLELQHLHRRLRTTSLYVTHDQVEAMTLAQRVMVMNKGVAEQIGTPVEVYEKPASRFVASFIGSPAMNLLDGVISASGDRFELPGGLALPIGADYRGHAGRNMTLGIRPEHIALSSQAEGGVPLTVDTLEFLGADNLAHGRWGDQKLVVRLAHQQRPAAGSTLWLHLPEHQRHLFDGETGQRV.

In terms of domain architecture, ABC transporter spans 4–235 (LKLQAVTKSW…PASRFVASFI (232 aa)). 37-44 (GPSGCGKS) serves as a coordination point for ATP.

Belongs to the ABC transporter superfamily. sn-glycerol-3-phosphate importer (TC 3.A.1.1.3) family. In terms of assembly, the complex is composed of two ATP-binding proteins (UgpC), two transmembrane proteins (UgpA and UgpE) and a solute-binding protein (UgpB).

The protein localises to the cell inner membrane. It catalyses the reaction sn-glycerol 3-phosphate(out) + ATP + H2O = sn-glycerol 3-phosphate(in) + ADP + phosphate + H(+). Functionally, part of the ABC transporter complex UgpBAEC involved in sn-glycerol-3-phosphate (G3P) import. Responsible for energy coupling to the transport system. This chain is sn-glycerol-3-phosphate import ATP-binding protein UgpC, found in Salmonella choleraesuis (strain SC-B67).